A 350-amino-acid chain; its full sequence is DNA polymerase IV (350 aa).

Residues 6–187 (IIHIDMDAFY…LPVEKIFGIG (182 aa)) form the UmuC domain. The Mg(2+) site is built by Asp-10 and Asp-105. Residue Glu-106 is part of the active site.

It belongs to the DNA polymerase type-Y family. As to quaternary structure, monomer. Mg(2+) is required as a cofactor.

The protein localises to the cytoplasm. The catalysed reaction is DNA(n) + a 2'-deoxyribonucleoside 5'-triphosphate = DNA(n+1) + diphosphate. Its function is as follows. Poorly processive, error-prone DNA polymerase involved in untargeted mutagenesis. Copies undamaged DNA at stalled replication forks, which arise in vivo from mismatched or misaligned primer ends. These misaligned primers can be extended by PolIV. Exhibits no 3'-5' exonuclease (proofreading) activity. May be involved in translesional synthesis, in conjunction with the beta clamp from PolIII. The protein is DNA polymerase IV of Protochlamydia amoebophila (strain UWE25).